The following is a 443-amino-acid chain: Thymidine phosphorylase (443 aa).

It belongs to the thymidine/pyrimidine-nucleoside phosphorylase family. As to quaternary structure, homodimer.

The enzyme catalyses thymidine + phosphate = 2-deoxy-alpha-D-ribose 1-phosphate + thymine. Its pathway is pyrimidine metabolism; dTMP biosynthesis via salvage pathway; dTMP from thymine: step 1/2. The enzymes which catalyze the reversible phosphorolysis of pyrimidine nucleosides are involved in the degradation of these compounds and in their utilization as carbon and energy sources, or in the rescue of pyrimidine bases for nucleotide synthesis. The protein is Thymidine phosphorylase of Shewanella baltica (strain OS223).